Here is a 690-residue protein sequence, read N- to C-terminus: Choline transporter-like 1 (690 aa).

Residues 23-43 (IFWLVLYVVFWIALIVIAVFS) form a helical membrane-spanning segment. A glycan (N-linked (GlcNAc...) asparagine) is linked at N134. Helical transmembrane passes span 203–223 (LYKAWPTIVLICALSLVFSIV), 237–259 (WLICIIVVVASVGITGVLWWSYY), 282–302 (ATIYVLAIAATCIMIILLVVI), and 334–354 (LLAFLALSVFLAFWVVVVVCL). Residue N391 is glycosylated (N-linked (GlcNAc...) asparagine). A run of 4 helical transmembrane segments spans residues 415–435 (IYIIGLIWTSEFIFACQQLAI), 464–484 (LGSVAKGSLIITIFKIPRLIL), 565–585 (FVLFLGKLAVASICGLISILL), and 594–614 (FYMAPVIIITVFAFFIAHIIL).

It belongs to the CTL (choline transporter-like) family.

The protein localises to the membrane. This Anopheles gambiae (African malaria mosquito) protein is Choline transporter-like 1.